The chain runs to 255 residues: Taurine import ATP-binding protein TauB (255 aa).

The ABC transporter domain occupies 2-229 (LNVSGLWAEY…RYAEGEPCRA (228 aa)). 34–41 (GPSGCGKT) contacts ATP.

This sequence belongs to the ABC transporter superfamily. Taurine importer (TC 3.A.1.17.1) family. In terms of assembly, the complex is composed of two ATP-binding proteins (TauB), two transmembrane proteins (TauC) and a solute-binding protein (TauA).

It localises to the cell inner membrane. The enzyme catalyses taurine(out) + ATP + H2O = taurine(in) + ADP + phosphate + H(+). Functionally, part of the ABC transporter complex TauABC involved in taurine import. Responsible for energy coupling to the transport system. The sequence is that of Taurine import ATP-binding protein TauB from Yersinia pseudotuberculosis serotype I (strain IP32953).